Reading from the N-terminus, the 412-residue chain is Regulator of microtubule dynamics protein 2 (412 aa).

The chain crosses the membrane as a helical span at residues 9–28 (LLLGIMAGTAGISLLVLWYH). Ser51 is subject to Phosphoserine. Residues 72–110 (QLQILEKLNELLTNVEELKEEIKFLKETIPKLEECIQDE) are a coiled coil. Ser121 is subject to Phosphoserine. The tract at residues 122–153 (PQHRARKKKTTTTTVQRPATSNSSEEAESEGG) is disordered. Thr141 carries the phosphothreonine modification. Tyr154 is modified (phosphotyrosine). 2 positions are modified to phosphothreonine: Thr156 and Thr159.

Belongs to the RMDN family. Interacts with microtubules.

It localises to the membrane. It is found in the cytoplasm. The protein localises to the cytoskeleton. Its subcellular location is the spindle. The protein resides in the spindle pole. This chain is Regulator of microtubule dynamics protein 2 (Rmdn2), found in Rattus norvegicus (Rat).